The following is a 212-amino-acid chain: Octanoyltransferase (212 aa).

One can recognise a BPL/LPL catalytic domain in the interval 31-209 (AETQDEIWLV…HFADLLGYNI (179 aa)). Substrate-binding positions include 70 to 77 (RGGQITYH), 138 to 140 (SLG), and 151 to 153 (GLA). The Acyl-thioester intermediate role is filled by cysteine 169.

The protein belongs to the LipB family.

The protein localises to the cytoplasm. The enzyme catalyses octanoyl-[ACP] + L-lysyl-[protein] = N(6)-octanoyl-L-lysyl-[protein] + holo-[ACP] + H(+). It functions in the pathway protein modification; protein lipoylation via endogenous pathway; protein N(6)-(lipoyl)lysine from octanoyl-[acyl-carrier-protein]: step 1/2. Catalyzes the transfer of endogenously produced octanoic acid from octanoyl-acyl-carrier-protein onto the lipoyl domains of lipoate-dependent enzymes. Lipoyl-ACP can also act as a substrate although octanoyl-ACP is likely to be the physiological substrate. The protein is Octanoyltransferase of Haemophilus influenzae (strain PittGG).